The chain runs to 76 residues: UPF0248 protein MmarC7_1289 (76 aa).

Belongs to the UPF0248 family.

This Methanococcus maripaludis (strain C7 / ATCC BAA-1331) protein is UPF0248 protein MmarC7_1289.